A 115-amino-acid polypeptide reads, in one-letter code: MNMLVTMLINTTLSFVLILIAFWLPQLNIYTEKANPYECGFDPMSSARLPFSMKFFLVAITFLLFDLEIALLLPMPWAMQTQDIKTMTLTAFILLSVLALGLAYEWTQKGLEWTE.

The next 3 membrane-spanning stretches (helical) occupy residues 4-24 (LVTM…AFWL), 55-75 (FFLV…LLPM), and 86-106 (TMTL…AYEW).

It belongs to the complex I subunit 3 family. In terms of assembly, core subunit of respiratory chain NADH dehydrogenase (Complex I) which is composed of 45 different subunits. Interacts with TMEM186. Interacts with TMEM242.

The protein localises to the mitochondrion inner membrane. It catalyses the reaction a ubiquinone + NADH + 5 H(+)(in) = a ubiquinol + NAD(+) + 4 H(+)(out). Core subunit of the mitochondrial membrane respiratory chain NADH dehydrogenase (Complex I) which catalyzes electron transfer from NADH through the respiratory chain, using ubiquinone as an electron acceptor. Essential for the catalytic activity of complex I. The polypeptide is NADH-ubiquinone oxidoreductase chain 3 (Nelsonia neotomodon (Diminutive woodrat)).